A 384-amino-acid polypeptide reads, in one-letter code: Putative glutamate--cysteine ligase 2-1 (384 aa).

The protein belongs to the glutamate--cysteine ligase type 2 family. YbdK subfamily.

It catalyses the reaction L-cysteine + L-glutamate + ATP = gamma-L-glutamyl-L-cysteine + ADP + phosphate + H(+). ATP-dependent carboxylate-amine ligase which exhibits weak glutamate--cysteine ligase activity. This Paenarthrobacter aurescens (strain TC1) protein is Putative glutamate--cysteine ligase 2-1.